Reading from the N-terminus, the 575-residue chain is MTYFPEEVVEHIFSFLPAQRDRNTVSLVCKVWYEIERLSRRGVFVGNCYAVRAGRVAARFPNVRALTVKGKPHFADFNLVPPDWGGYAGPWIEAAARGCHGLEELRMKRMVVSDESLELLARSFPRFRALVLISCEGFSTDGLAAVASHCKLLRELDLQENEVEDRGPRWLSCFPDSCTSLVSLNFACIKGEVNAGSLERLVSRSPNLRSLRLNRSVSVDTLAKILLRTPNLEDLGTGNLTDDFQTESYFKLTSALEKCKMLRSLSGFWDASPVCLSFIYPLCAQLTGLNLSYAPTLDASDLTKMISRCVKLQRLWVLDCISDKGLQVVASSCKDLQELRVFPSDFYVAGYSAVTEEGLVAVSLGCPKLNSLLYFCHQMTNAALVTVAKNCPNFTRFRLCILEPGKPDVVTSQPLDEGFGAIVRECKGLQRLSISGLLTDKVFMYIGKYAKQLEMLSIAFAGDSDKGMMHVMNGCKNLRKLEIRDSPFGDAALLGNFARYETMRSLWMSSCNVTLKGCQVLASKMPMLNVEVINERDGSNEMEENHGDLPKVEKLYVYRTTAGARDDAPNFVKIL.

Residues 1 to 45 form the F-box domain; the sequence is MTYFPEEVVEHIFSFLPAQRDRNTVSLVCKVWYEIERLSRRGVFV. Lys-69 is a 1D-myo-inositol hexakisphosphate binding site. The interaction with auxin-responsive proteins stretch occupies residues 76-77; it reads DF. 1D-myo-inositol hexakisphosphate-binding positions include 108-109 and Arg-340; that span reads KR. Positions 343–348 are interaction with auxin-responsive proteins; sequence PSDFYV. 396-398 serves as a coordination point for 1D-myo-inositol hexakisphosphate; the sequence is RFR. The interval 400–404 is interaction with auxin-responsive proteins; it reads CILEP. Residue Arg-431 participates in 1D-myo-inositol hexakisphosphate binding. Residues 459–460 form an interaction with auxin-responsive proteins region; the sequence is AF. 1D-myo-inositol hexakisphosphate contacts are provided by residues 479–480 and Arg-504; that span reads RK.

In terms of assembly, part of a SCF (SKP1-cullin-F-box) protein ligase complex. May interact with auxin and auxin-responsive proteins.

Its subcellular location is the nucleus. It functions in the pathway protein modification; protein ubiquitination. The protein is Transport inhibitor response 1-like protein Os04g0395600 of Oryza sativa subsp. japonica (Rice).